We begin with the raw amino-acid sequence, 223 residues long: Uracil-DNA glycosylase (223 aa).

The active-site Proton acceptor is aspartate 61.

This sequence belongs to the uracil-DNA glycosylase (UDG) superfamily. UNG family.

It is found in the cytoplasm. It catalyses the reaction Hydrolyzes single-stranded DNA or mismatched double-stranded DNA and polynucleotides, releasing free uracil.. Functionally, excises uracil residues from the DNA which can arise as a result of misincorporation of dUMP residues by DNA polymerase or due to deamination of cytosine. The polypeptide is Uracil-DNA glycosylase (Histophilus somni (strain 129Pt) (Haemophilus somnus)).